Consider the following 61-residue polypeptide: Potassium channel toxin alpha-KTx 6.7 (61 aa).

The signal sequence occupies residues 1–23; that stretch reads MNAKFILLLLVVTTTMLLPDTQG. 4 disulfides stabilise this stretch: cysteine 29–cysteine 50, cysteine 35–cysteine 55, cysteine 39–cysteine 57, and cysteine 45–cysteine 60. Cysteine 60 is subject to Cysteine amide.

Belongs to the short scorpion toxin superfamily. Potassium channel inhibitor family. Alpha-KTx 06 subfamily. Expressed by the venom gland.

The protein resides in the secreted. Functionally, blocker of voltage-gated potassium channels. This is Potassium channel toxin alpha-KTx 6.7 from Opistophthalmus carinatus (African yellow leg scorpion).